The following is a 182-amino-acid chain: UPF0397 protein BCA_2731 (182 aa).

5 consecutive transmembrane segments (helical) span residues 9 to 29, 40 to 60, 71 to 91, 114 to 134, and 142 to 162; these read VVAI…GFSI, AILT…IGLI, WGIW…MGLI, ITGL…DIIV, and IVIQ…VLGL.

This sequence belongs to the UPF0397 family.

The protein localises to the cell membrane. The polypeptide is UPF0397 protein BCA_2731 (Bacillus cereus (strain 03BB102)).